Here is a 148-residue protein sequence, read N- to C-terminus: Endoribonuclease YbeY (148 aa).

Positions 113, 117, and 123 each coordinate Zn(2+).

Belongs to the endoribonuclease YbeY family. Requires Zn(2+) as cofactor.

It localises to the cytoplasm. In terms of biological role, single strand-specific metallo-endoribonuclease involved in late-stage 70S ribosome quality control and in maturation of the 3' terminus of the 16S rRNA. The protein is Endoribonuclease YbeY of Borrelia turicatae (strain 91E135).